We begin with the raw amino-acid sequence, 1039 residues long: Antigen 43 (1039 aa).

The first 52 residues, 1 to 52 (MKRHLNTCYRLVWNHMTGAFVVASELARARGKRGGVAVALSLAAVTSLPVLA), serve as a signal peptide directing secretion. The region spanning 737 to 1039 (VNGENNSVRL…NGQATLNVTF (303 aa)) is the Autotransporter domain.

Interaction with TamA of the translocation and assembly module (TAM) initiates insertion in the outer membrane.

The protein resides in the periplasm. The protein localises to the secreted. It localises to the cell surface. Its subcellular location is the cell outer membrane. Functionally, controls colony form variation and autoaggregation. May function as an adhesin. This is Antigen 43 (flu) from Escherichia coli (strain K12).